The sequence spans 89 residues: Pigment dispersing factor homolog pdf-2 (89 aa).

The first 27 residues, 1 to 27, serve as a signal peptide directing secretion; the sequence is MSSRISVSLLLLAVVATMFFTANVVDA.

In terms of biological role, probable ligand of isoforms a and b of the calcitonin receptor-like protein, pdfr-1, a G-protein coupled receptor. May not signal through isoform c of pdfr-1. Involved in locomotion; may play a role in circadian rhythms of locomotor activity. Modulator of egg-laying. This Caenorhabditis elegans protein is Pigment dispersing factor homolog pdf-2.